A 395-amino-acid chain; its full sequence is Dihydroorotate dehydrogenase (quinone), mitochondrial (395 aa).

The N-terminal 10 residues, 1-10, are a transit peptide targeting the mitochondrion; not cleaved; sequence MAWRQLRKRA. Over 1 to 10 the chain is Mitochondrial matrix; sequence MAWRQLRKRA. A helical membrane pass occupies residues 11–30; that stretch reads LDAAIILGGGGLLFTSYLTA. The Mitochondrial intermembrane segment spans residues 31–395; sequence TGDDHFYAEY…TDAIGVDHRR (365 aa). Residues 95-99 and Ser-119 contribute to the FMN site; that span reads AGFDK. Lys-99 lines the substrate pocket. 144-148 contributes to the substrate binding site; that stretch reads NRYGF. Positions 180 and 211 each coordinate FMN. Position 211 to 216 (211 to 216) interacts with substrate; sequence NVSSPN. Ser-214 serves as the catalytic Nucleophile. FMN is bound by residues Lys-254 and Thr-282. Substrate is bound at residue 283–284; that stretch reads NT. FMN-binding positions include Gly-305, Gly-334, and 355–356; that span reads YT.

The protein belongs to the dihydroorotate dehydrogenase family. Type 2 subfamily. In terms of assembly, monomer. The cofactor is FMN. In terms of processing, the uncleaved transit peptide is required for mitochondrial targeting and proper membrane integration.

It is found in the mitochondrion inner membrane. It catalyses the reaction (S)-dihydroorotate + a quinone = orotate + a quinol. Its pathway is pyrimidine metabolism; UMP biosynthesis via de novo pathway; orotate from (S)-dihydroorotate (quinone route): step 1/1. Functionally, catalyzes the conversion of dihydroorotate to orotate with quinone as electron acceptor. Required for UMP biosynthesis via de novo pathway. The chain is Dihydroorotate dehydrogenase (quinone), mitochondrial (Dhodh) from Mus musculus (Mouse).